A 461-amino-acid polypeptide reads, in one-letter code: Argininosuccinate lyase (461 aa).

The protein belongs to the lyase 1 family. Argininosuccinate lyase subfamily.

Its subcellular location is the cytoplasm. It carries out the reaction 2-(N(omega)-L-arginino)succinate = fumarate + L-arginine. Its pathway is amino-acid biosynthesis; L-arginine biosynthesis; L-arginine from L-ornithine and carbamoyl phosphate: step 3/3. The polypeptide is Argininosuccinate lyase (Dehalococcoides mccartyi (strain CBDB1)).